A 127-amino-acid chain; its full sequence is Small ribosomal subunit protein uS11 (127 aa).

It belongs to the universal ribosomal protein uS11 family. As to quaternary structure, part of the 30S ribosomal subunit. Interacts with proteins S7 and S18. Binds to IF-3.

Functionally, located on the platform of the 30S subunit, it bridges several disparate RNA helices of the 16S rRNA. Forms part of the Shine-Dalgarno cleft in the 70S ribosome. This is Small ribosomal subunit protein uS11 from Streptococcus pyogenes serotype M49 (strain NZ131).